We begin with the raw amino-acid sequence, 417 residues long: Phosphoglycerate kinase 2 (417 aa).

Val23, Asp24, Phe25, Asn26, Asn38, Arg39, Ser62, His63, Gly65, Arg66, Leu121, Arg122, His168, and Arg169 together coordinate (2R)-3-phosphoglycerate. Gly212 contributes to the ADP binding site. Residue Gly212 participates in CDP binding. The AMP site is built by Ala213 and Lys214. Position 213 (Ala213) interacts with ATP. Residue Ala213 participates in Mg(2+) binding. Residue Asp217 coordinates CDP. Asp217 provides a ligand contact to Mg(2+). Lys218 contacts AMP. Lys218 contacts ATP. Gly236 is a binding site for ADP. Gly236 is a binding site for CDP. Residues Gly237 and Gly312 each coordinate AMP. ATP contacts are provided by Gly237 and Gly312. CDP is bound by residues Gly337 and Phe342. Residue Phe342 coordinates ADP. Glu343 is an AMP binding site. Residues Glu343, Asp374, and Thr375 each coordinate ATP. Residue Asp374 coordinates Mg(2+).

Belongs to the phosphoglycerate kinase family. Monomer. The cofactor is Mg(2+).

It localises to the cytoplasm. It is found in the mitochondrion. It carries out the reaction (2R)-3-phosphoglycerate + ATP = (2R)-3-phospho-glyceroyl phosphate + ADP. It participates in carbohydrate degradation; glycolysis; pyruvate from D-glyceraldehyde 3-phosphate: step 2/5. In terms of biological role, catalyzes one of the two ATP producing reactions in the glycolytic pathway via the reversible conversion of 1,3-diphosphoglycerate to 3-phosphoglycerate. Both L- and D- forms of purine and pyrimidine nucleotides can be used as substrates, but the activity is much lower on pyrimidines. Negatively regulates the biosynthesis of acetyl-CoA from pyruvate in the mitochondrion. This chain is Phosphoglycerate kinase 2 (PGK2), found in Rhizopus niveus.